The primary structure comprises 312 residues: Aspartate carbamoyltransferase catalytic subunit (312 aa).

Carbamoyl phosphate contacts are provided by Arg-58 and Thr-59. An L-aspartate-binding site is contributed by Lys-86. The carbamoyl phosphate site is built by Arg-108, His-136, and Gln-139. Residues Arg-169 and Arg-223 each coordinate L-aspartate. 2 residues coordinate carbamoyl phosphate: Gly-264 and Pro-265.

This sequence belongs to the aspartate/ornithine carbamoyltransferase superfamily. ATCase family. In terms of assembly, heterododecamer (2C3:3R2) of six catalytic PyrB chains organized as two trimers (C3), and six regulatory PyrI chains organized as three dimers (R2).

The catalysed reaction is carbamoyl phosphate + L-aspartate = N-carbamoyl-L-aspartate + phosphate + H(+). The protein operates within pyrimidine metabolism; UMP biosynthesis via de novo pathway; (S)-dihydroorotate from bicarbonate: step 2/3. Its function is as follows. Catalyzes the condensation of carbamoyl phosphate and aspartate to form carbamoyl aspartate and inorganic phosphate, the committed step in the de novo pyrimidine nucleotide biosynthesis pathway. The protein is Aspartate carbamoyltransferase catalytic subunit of Desulforapulum autotrophicum (strain ATCC 43914 / DSM 3382 / VKM B-1955 / HRM2) (Desulfobacterium autotrophicum).